The primary structure comprises 154 residues: Transcriptional repressor NrdR (154 aa).

The interval 1-22 (MRCPFCAHDDSQVKDSRPTDDG) is disordered. Residues 3 to 34 (CPFCAHDDSQVKDSRPTDDGAAIRRRRQCEGC) fold into a zinc finger. Positions 7 to 22 (AHDDSQVKDSRPTDDG) are enriched in basic and acidic residues. Residues 49–139 (MTVVKSDGRR…VYKDFREAKD (91 aa)) form the ATP-cone domain.

It belongs to the NrdR family. Requires Zn(2+) as cofactor.

Negatively regulates transcription of bacterial ribonucleotide reductase nrd genes and operons by binding to NrdR-boxes. The chain is Transcriptional repressor NrdR from Rhizorhabdus wittichii (strain DSM 6014 / CCUG 31198 / JCM 15750 / NBRC 105917 / EY 4224 / RW1) (Sphingomonas wittichii).